A 938-amino-acid chain; its full sequence is Protein translocase subunit SecA (938 aa).

Residues Gln-90, 108-112 (GEGKT), and Asp-504 contribute to the ATP site.

It belongs to the SecA family. Monomer and homodimer. Part of the essential Sec protein translocation apparatus which comprises SecA, SecYEG and auxiliary proteins SecDF. Other proteins may also be involved.

It localises to the cell inner membrane. Its subcellular location is the cellular thylakoid membrane. The protein resides in the cytoplasm. The enzyme catalyses ATP + H2O + cellular proteinSide 1 = ADP + phosphate + cellular proteinSide 2.. In terms of biological role, part of the Sec protein translocase complex. Interacts with the SecYEG preprotein conducting channel. Has a central role in coupling the hydrolysis of ATP to the transfer of proteins into and across the cell membrane, serving as an ATP-driven molecular motor driving the stepwise translocation of polypeptide chains across the membrane. Its function is as follows. Probably participates in protein translocation into and across both the cytoplasmic and thylakoid membranes in cyanobacterial cells. The chain is Protein translocase subunit SecA from Microcystis aeruginosa (strain NIES-843 / IAM M-2473).